The sequence spans 586 residues: Phosphomethylpyrimidine synthase (586 aa).

A disordered region spans residues 1-59 (MKQSVSAEQIELKSSLPGSKKVYVDGPREGMKVPMREIEQSDTNGVPNPPIRVYDTSGP). Residues 22-39 (VYVDGPREGMKVPMREIE) show a composition bias toward basic and acidic residues. Substrate contacts are provided by residues N193, M222, Y251, H287, 307 to 309 (SRG), 348 to 351 (DGLR), and E387. H391 is a Zn(2+) binding site. Y414 is a binding site for substrate. H455 contributes to the Zn(2+) binding site. 3 residues coordinate [4Fe-4S] cluster: C535, C538, and C543.

It belongs to the ThiC family. The cofactor is [4Fe-4S] cluster.

It carries out the reaction 5-amino-1-(5-phospho-beta-D-ribosyl)imidazole + S-adenosyl-L-methionine = 4-amino-2-methyl-5-(phosphooxymethyl)pyrimidine + CO + 5'-deoxyadenosine + formate + L-methionine + 3 H(+). It functions in the pathway cofactor biosynthesis; thiamine diphosphate biosynthesis. Its function is as follows. Catalyzes the synthesis of the hydroxymethylpyrimidine phosphate (HMP-P) moiety of thiamine from aminoimidazole ribotide (AIR) in a radical S-adenosyl-L-methionine (SAM)-dependent reaction. This chain is Phosphomethylpyrimidine synthase, found in Bacillus cereus (strain ZK / E33L).